Here is a 66-residue protein sequence, read N- to C-terminus: Large ribosomal subunit protein uL29c (66 aa).

The protein belongs to the universal ribosomal protein uL29 family.

It localises to the plastid. The protein localises to the chloroplast. The chain is Large ribosomal subunit protein uL29c from Gracilaria tenuistipitata var. liui (Red alga).